Consider the following 394-residue polypeptide: Muscle cell intermediate filament protein AV71 (394 aa).

The tract at residues 1–73 (AEINLVRRRV…RVHDQEITEL (73 aa)) is coil 1B. The 239-residue stretch at 1–239 (AEINLVRRRV…KMLEGEENRA (239 aa)) folds into the IF rod domain. Positions 74–91 (QAMAARDTTPENREYFKN) are linker 12. A coil 2 region spans residues 92–239 (ELSSAIRDIR…KMLEGEENRA (148 aa)). Residues 240–394 (GLRQLVEQVV…HIQRSSHTIN (155 aa)) are tail. The region spanning 272–389 (SRTSFQRSAK…EERASHIQRS (118 aa)) is the LTD domain.

This sequence belongs to the intermediate filament family.

The sequence is that of Muscle cell intermediate filament protein AV71 (AV71) from Acanthocheilonema viteae (Filarial nematode worm).